We begin with the raw amino-acid sequence, 315 residues long: L-threo-3-deoxy-hexylosonate aldolase (315 aa).

Substrate is bound at residue 50–51 (SN). Residue K174 is the Schiff-base intermediate with substrate of the active site.

Belongs to the DapA family.

It catalyses the reaction 2-dehydro-3-deoxy-L-galactonate = L-glyceraldehyde + pyruvate. It functions in the pathway carbohydrate acid metabolism. Its function is as follows. Mediates the conversion of 2-dehydro-3-deoxy-L-galactonate to pyruvate and L-glyceraldehyde in D-galacturonate catabolic process. This Hypocrea jecorina (Trichoderma reesei) protein is L-threo-3-deoxy-hexylosonate aldolase (lga1).